The chain runs to 414 residues: Protein phosphatase 2C homolog 3 (414 aa).

Residues 23-288 (LYGLSSMQGW…DNMTVCIVAL (266 aa)) form the PPM-type phosphatase domain. The Mn(2+) site is built by Asp-62, Gly-63, Asp-230, and Asp-279. Disordered regions lie at residues 313–368 (APPE…TNGS) and 380–414 (FPHK…SAAD). The span at 350–363 (GYDKDANENSKEDD) shows a compositional bias: basic and acidic residues. Residues 390–400 (SSETDIVNSNK) show a composition bias toward polar residues. The segment covering 401–414 (DVADDHKEAVSAAD) has biased composition (basic and acidic residues).

Belongs to the PP2C family. In terms of assembly, monomer. Mg(2+) serves as cofactor. The cofactor is Mn(2+).

The protein resides in the cytoplasm. Its subcellular location is the nucleus. The catalysed reaction is O-phospho-L-seryl-[protein] + H2O = L-seryl-[protein] + phosphate. It catalyses the reaction O-phospho-L-threonyl-[protein] + H2O = L-threonyl-[protein] + phosphate. In terms of biological role, dephosphorylating regulator for many key proteins. Has an important role in osmotic stability and cell shape control. It may negatively regulate the osmosensing signal transmitted through wis1 map kinase. In Schizosaccharomyces pombe (strain 972 / ATCC 24843) (Fission yeast), this protein is Protein phosphatase 2C homolog 3 (ptc3).